The chain runs to 391 residues: GATA-binding factor 6-A (391 aa).

Residues 57-111 form a disordered region; it reads GAHSVNSHWSQATSESSSFNNSSPHTSSRYHYPPSPPMHNGSTRDTGYSSSLTVS. Residues 66–83 show a composition bias toward low complexity; the sequence is SQATSESSSFNNSSPHTS. Over residues 96–111 the composition is skewed to polar residues; sequence NGSTRDTGYSSSLTVS. GATA-type zinc fingers lie at residues 182 to 206 and 236 to 260; these read CVNC…CNAC and CANC…CNAC. The disordered stretch occupies residues 274-355; it reads AMKKEGIQTR…TESTSPNSNT (82 aa). The segment covering 282-291 has biased composition (basic residues); the sequence is TRKRKPKTLN. Residues 292–319 are compositionally biased toward low complexity; that stretch reads KSKSSSSNGNSSHQISMTPTSTTSSTNS. The segment covering 326–355 has biased composition (polar residues); sequence GSPSQNTTPVVASSLMSTQQTESTSPNSNT.

As to expression, in embryos, expressed in the presumptive heart mesoderm. In adults, expressed at high levels in heart, small intestine, and stomach and at lower levels in lung, pancreas and colon.

It localises to the nucleus. In terms of biological role, transcriptional activator that binds 5'-GATA-3'-containing motifs within gene promoters. Regulates cardiac-specific transcription during embryogenesis and thereby cardiogenesis. This Xenopus laevis (African clawed frog) protein is GATA-binding factor 6-A (gata6-a).